A 187-amino-acid polypeptide reads, in one-letter code: NAC domain-containing protein 104 (187 aa).

The 153-residue stretch at 3–155 folds into the NAC domain; it reads LPPGFRFFPT…KWVICRVYEQ (153 aa). A DNA-binding region spans residues 94–161; sequence VGIKKYLTFY…VYEQNCSEEE (68 aa). Positions 118-142 are disordered; sequence LPDSSSSSSRSSKRSSRASSSSHKP.

As to expression, expressed in root xylem vessels. Expressed in stems, vascular tissue of cauline leaves and tracheary elements of sepals.

It is found in the nucleus. In terms of biological role, probable transcription factor that influences tracheary elements and xylem development by negatively regulating secondary cell wall fiber synthesis and programmed cell death. This is NAC domain-containing protein 104 from Arabidopsis thaliana (Mouse-ear cress).